The sequence spans 163 residues: Cyclic pyranopterin monophosphate synthase (163 aa).

Substrate-binding positions include L78 to H80 and M116 to E117. Residue D131 is part of the active site.

The protein belongs to the MoaC family. As to quaternary structure, homohexamer; trimer of dimers.

It catalyses the reaction (8S)-3',8-cyclo-7,8-dihydroguanosine 5'-triphosphate = cyclic pyranopterin phosphate + diphosphate. It functions in the pathway cofactor biosynthesis; molybdopterin biosynthesis. Catalyzes the conversion of (8S)-3',8-cyclo-7,8-dihydroguanosine 5'-triphosphate to cyclic pyranopterin monophosphate (cPMP). The chain is Cyclic pyranopterin monophosphate synthase from Agrobacterium fabrum (strain C58 / ATCC 33970) (Agrobacterium tumefaciens (strain C58)).